We begin with the raw amino-acid sequence, 1253 residues long: Latent-transforming growth factor beta-binding protein 3 (1253 aa).

The first 38 residues, 1–38, serve as a signal peptide directing secretion; sequence MPGPRGAAHGLAPAMRQAGALGLLALLLLALLGPGGGA. N-linked (GlcNAc...) asparagine glycosylation is present at Asn-86. Residues 106 to 138 enclose the EGF-like 1 domain; sequence RVVVCPLPCMNGGQCSSRNQCLCPPDFTGRFCQ. Cystine bridges form between Cys-110/Cys-120, Cys-114/Cys-126, and Cys-128/Cys-137. The interval 244–270 is disordered; it reads GPNAEGPASSQHLLPHPKPQHPRPPTQ. Positions 274–328 constitute a TB 1 domain; it reads GRCFQDTLPKQPCGSNPLPGLTKQEDCCGSIGTAWGQSKCHKCPQLQYTGVQKPG. 3 disulfides stabilise this stretch: Cys-276/Cys-300, Cys-286/Cys-313, and Cys-301/Cys-316. Asn-346 is a glycosylation site (N-linked (GlcNAc...) asparagine). Residues 352–392 enclose the EGF-like 2; calcium-binding domain; that stretch reads DINECAMPGMCRHGDCLNNPGSYRCVCPPGHSLGPSRTQCI. Disulfide bonds link Cys-356–Cys-367, Cys-362–Cys-376, Cys-378–Cys-391, Cys-402–Cys-425, Cys-412–Cys-437, Cys-426–Cys-440, and Cys-427–Cys-452. The TB 2 domain maps to 400 to 452; sequence SLCFRLVSTEHQCQHPLTTRLTRQLCCCSVGKAWGARCQRCPADGTAAFKEIC. Residues 475–555 form a disordered region; it reads FSLFLHPDGP…PTFHRFLPDL (81 aa). Positions 571 to 612 constitute an EGF-like 3 domain; it reads ETDECRLNQNICGHGQCVPGPSDYSCHCNAGYRSHPQHRYCV. Intrachain disulfides connect Cys-575–Cys-587, Cys-582–Cys-596, Cys-598–Cys-611, Cys-617–Cys-629, Cys-622–Cys-638, Cys-661–Cys-673, Cys-667–Cys-682, Cys-684–Cys-698, Cys-745–Cys-756, Cys-751–Cys-765, Cys-767–Cys-780, Cys-786–Cys-797, Cys-792–Cys-806, Cys-808–Cys-821, Cys-827–Cys-838, Cys-833–Cys-847, Cys-849–Cys-861, Cys-867–Cys-880, Cys-874–Cys-889, Cys-891–Cys-904, Cys-916–Cys-939, Cys-926–Cys-951, Cys-940–Cys-956, Cys-941–Cys-968, Cys-994–Cys-1007, Cys-1002–Cys-1016, Cys-1018–Cys-1031, Cys-1037–Cys-1048, Cys-1043–Cys-1057, Cys-1059–Cys-1072, Cys-1113–Cys-1127, and Cys-1114–Cys-1136. The region spanning 613–656 is the EGF-like 4; calcium-binding domain; that stretch reads DVNECEAEPCGPGKGICMNTGGSYNCHCNRGYRLHVGAGGRSCV. In terms of domain architecture, EGF-like 5; calcium-binding spans 657–699; that stretch reads DLNECTKPHLCGDGGFCINFPGHYKCNCYPGYRLKASRPPICE. Positions 741–781 constitute an EGF-like 6; calcium-binding domain; the sequence is DVNECSEGTPCSPGWCENLPGSYRCTCAQGYEPAQDGLSCI. An EGF-like 7; calcium-binding domain is found at 782–822; sequence DVDECEAGKVCQDGICTNTPGSFQCQCLSGYHLSRDRSRCE. The EGF-like 8; calcium-binding domain occupies 823–861; that stretch reads DIDECDFPAACIGGDCINTNGSYRCLCPQGHRLVGGRKC. An N-linked (GlcNAc...) asparagine glycan is attached at Asn-842. The region spanning 863-905 is the EGF-like 9; calcium-binding domain; sequence DIDECSQDPGLCLPHGACENLQGSYVCVCDEGFTLTQDQHGCE. Positions 914–968 constitute a TB 3 domain; sequence KECYLNFDDTVFCDSVLATNVTQQECCCSLGAGWGDHCEIYPCPVYSSAEFHSLC. An N-linked (GlcNAc...) asparagine glycan is attached at Asn-933. Residues 990 to 1032 form the EGF-like 10; calcium-binding domain; the sequence is DIDECILFGAEICKEGKCVNTQPGYECYCKQGFYYDGNLLECV. Positions 1033-1072 constitute an EGF-like 11; calcium-binding domain; sequence DVDECLDESNCRNGVCENTRGGYRCACTPPAEYSPAQRQC. Residues 1086–1136 enclose the TB 4 domain; the sequence is EVCWGQRGEDGMCMGPLAGPALTFDDCCCRQGRGWGTQCRPCPPRGTGSQC. Residues 1138 to 1148 show a composition bias toward polar residues; sequence TSQSESNSFWD. A disordered region spans residues 1138 to 1169; the sequence is TSQSESNSFWDTSPLLLGKSPRDEDSSEEDSD. In terms of domain architecture, EGF-like 12; calcium-binding spans 1204–1231; sequence DIDECRELNQRGLLCKSERCVNTSGSFR. Cystine bridges form between Cys-1208–Cys-1223 and Cys-1218–Cys-1232. Asn-1225 is a glycosylation site (N-linked (GlcNAc...) asparagine).

It belongs to the LTBP family. Forms part of the large latent transforming growth factor beta (TGFB1) precursor complex; removal is essential for activation of complex. Interacts with EFEMP2. In terms of processing, contains hydroxylated asparagine residues. Two intrachain disulfide bonds from the TB3 domain are rearranged upon TGFB1 binding, and form interchain bonds with TGFB1 propeptide, anchoring it to the extracellular matrix.

The protein localises to the secreted. The protein resides in the extracellular space. Its subcellular location is the extracellular matrix. Key regulator of transforming growth factor beta (TGFB1, TGFB2 and TGFB3) that controls TGF-beta activation by maintaining it in a latent state during storage in extracellular space. Associates specifically via disulfide bonds with the Latency-associated peptide (LAP), which is the regulatory chain of TGF-beta, and regulates integrin-dependent activation of TGF-beta. This Mus musculus (Mouse) protein is Latent-transforming growth factor beta-binding protein 3 (Ltbp3).